The following is a 248-amino-acid chain: ATP synthase subunit a, chloroplastic (248 aa).

The next 5 membrane-spanning stretches (helical) occupy residues Gly35–Gly55, Val94–Ile114, Ile133–Ser153, Val202–Ala222, and Ser224–Gly244.

This sequence belongs to the ATPase A chain family. In terms of assembly, F-type ATPases have 2 components, CF(1) - the catalytic core - and CF(0) - the membrane proton channel. CF(1) has five subunits: alpha(3), beta(3), gamma(1), delta(1), epsilon(1). CF(0) has four main subunits: a, b, b' and c.

The protein resides in the plastid. The protein localises to the chloroplast thylakoid membrane. Key component of the proton channel; it plays a direct role in the translocation of protons across the membrane. The protein is ATP synthase subunit a, chloroplastic of Porphyra purpurea (Red seaweed).